The following is a 321-amino-acid chain: Fibronectin type III domain-containing protein 8 (321 aa).

The 103-residue stretch at 175–277 (VPEAPFVCEH…KPYKFATVAT (103 aa)) folds into the Fibronectin type-III domain.

The polypeptide is Fibronectin type III domain-containing protein 8 (FNDC8) (Bos taurus (Bovine)).